A 205-amino-acid chain; its full sequence is Nucleoside triphosphate pyrophosphatase (205 aa).

Aspartate 76 (proton acceptor) is an active-site residue.

Belongs to the Maf family. Requires a divalent metal cation as cofactor.

It localises to the cytoplasm. The catalysed reaction is a ribonucleoside 5'-triphosphate + H2O = a ribonucleoside 5'-phosphate + diphosphate + H(+). It carries out the reaction a 2'-deoxyribonucleoside 5'-triphosphate + H2O = a 2'-deoxyribonucleoside 5'-phosphate + diphosphate + H(+). In terms of biological role, nucleoside triphosphate pyrophosphatase. May have a dual role in cell division arrest and in preventing the incorporation of modified nucleotides into cellular nucleic acids. The protein is Nucleoside triphosphate pyrophosphatase of Orientia tsutsugamushi (strain Boryong) (Rickettsia tsutsugamushi).